The following is a 145-amino-acid chain: Putative pre-16S rRNA nuclease (145 aa).

Belongs to the YqgF nuclease family.

It is found in the cytoplasm. In terms of biological role, could be a nuclease involved in processing of the 5'-end of pre-16S rRNA. The protein is Putative pre-16S rRNA nuclease of Prochlorococcus marinus (strain MIT 9211).